A 213-amino-acid polypeptide reads, in one-letter code: Small ribosomal subunit protein uS3 (213 aa).

Residues 38–106 enclose the KH type-2 domain; the sequence is IRAFVKKLLY…EFSLEVNEIR (69 aa).

The protein belongs to the universal ribosomal protein uS3 family. Part of the 30S ribosomal subunit. Forms a tight complex with proteins S10 and S14.

Binds the lower part of the 30S subunit head. Binds mRNA in the 70S ribosome, positioning it for translation. The protein is Small ribosomal subunit protein uS3 of Desulfovibrio desulfuricans (strain ATCC 27774 / DSM 6949 / MB).